We begin with the raw amino-acid sequence, 101 residues long: Urease subunit beta (101 aa).

This sequence belongs to the urease beta subunit family. Heterotrimer of UreA (gamma), UreB (beta) and UreC (alpha) subunits. Three heterotrimers associate to form the active enzyme.

It localises to the cytoplasm. The enzyme catalyses urea + 2 H2O + H(+) = hydrogencarbonate + 2 NH4(+). It functions in the pathway nitrogen metabolism; urea degradation; CO(2) and NH(3) from urea (urease route): step 1/1. The chain is Urease subunit beta from Burkholderia thailandensis (strain ATCC 700388 / DSM 13276 / CCUG 48851 / CIP 106301 / E264).